A 215-amino-acid polypeptide reads, in one-letter code: Ribosome maturation factor RimP (215 aa).

The interval 180–215 (KDNRARKEAKKRRGEPDDDVPEGAEADATEEHEQES) is disordered. Residues 195 to 207 (PDDDVPEGAEADA) show a composition bias toward acidic residues.

The protein belongs to the RimP family.

The protein localises to the cytoplasm. Required for maturation of 30S ribosomal subunits. The polypeptide is Ribosome maturation factor RimP (Mesorhizobium japonicum (strain LMG 29417 / CECT 9101 / MAFF 303099) (Mesorhizobium loti (strain MAFF 303099))).